A 734-amino-acid chain; its full sequence is MFIRKEIDLGDGKVITIETGKMAKQADGATIVRMGDTMVIATVVSSRTPPSPNQDFFPMQVEYREKYYAAGKFPGGFIKRESRPSEKEILSARLIDRALRPLFPNGYYQDTQIIISVISSDQLNDADVLGGIAASAAIMVSDIPFANSMSEVRVGRINGEFVINPTINELAQSDIDISIGGTNDTICMLEGEMNEISEAEMLEAIRFGHEAIKKICSLQDDIAAEVNKPKRSFLAIDAPDELKESIKEACEAPLKELAYMPLAKEERAEKTTAVYKSITEQILGRYKNEITAEDIAADPSKALYLNEQIISGHIHAIEKQVMRHMILDDAKRLDGRKLEEVRPISIELGLIPRAHGSALFTRGETQALVVLTLGTKKDAQMIDTLLDDTEKRFMLHYNFPPFSVGETGRVGGVGRREIGHGNLAERAVKKVVPSESEFPYTIRLVSEILESNGSSSMASVCGATLAAMDGGVPLTKPVSGIAMGLIKEDDNYAVLSDILGNEDHLGDMDFKVAGTRDGITACQMDIKIDGLDYHILEKALEQSKNGRLHILDKMTESIADPRGEIGQYAPKLSTIQVPVDAIGMIIGKGGETIRSITEETGAQINVDDDGTVTISSPNGESAAAAIETIKTLISKPEVGTIYMGKVKDIREDLGAFVEILPRTDGLVHISEIARERVNKVSDHLKQGDRVKVKLIDIRKDQRSGKIRYALSIKALLDMPAESANGPSAQEEQNQ.

Mg(2+) contacts are provided by Asp-503 and Asp-509. One can recognise a KH domain in the interval 570-629; it reads PKLSTIQVPVDAIGMIIGKGGETIRSITEETGAQINVDDDGTVTISSPNGESAAAAIETI. One can recognise an S1 motif domain in the interval 639–713; that stretch reads GTIYMGKVKD…GKIRYALSIK (75 aa).

Belongs to the polyribonucleotide nucleotidyltransferase family. Mg(2+) is required as a cofactor.

It is found in the cytoplasm. The enzyme catalyses RNA(n+1) + phosphate = RNA(n) + a ribonucleoside 5'-diphosphate. In terms of biological role, involved in mRNA degradation. Catalyzes the phosphorolysis of single-stranded polyribonucleotides processively in the 3'- to 5'-direction. The polypeptide is Polyribonucleotide nucleotidyltransferase (Chlorobium phaeobacteroides (strain BS1)).